The primary structure comprises 515 residues: Signal transduction histidine-protein kinase/phosphatase MprB (515 aa).

The Cytoplasmic segment spans residues 1-24; that stretch reads MTLPPPPSRLKPPRNTSSLSLRWR. The helical transmembrane segment at 25-45 threads the bilayer; sequence VMLLAMSMVAMVVVLMSVAVY. The Extracellular portion of the chain corresponds to 46–165; sequence AVVSRALYDD…TGQVLGRLGT (120 aa). A helical transmembrane segment spans residues 166 to 186; the sequence is VLLIVGGVGVAVAAIAGGMVA. In terms of domain architecture, HAMP spans 187-239; sequence RAGLRPVGRLTQAAERVARTDDLRPIPVFGSDELARLTEAFNMMLRALTESRE. Over 187 to 515 the chain is Cytoplasmic; sequence RAGLRPVGRL…GKSRSASKEL (329 aa). Residues 247 to 467 enclose the Histidine kinase domain; it reads DAGHELRTPL…SFYVMLPGRP (221 aa). Histidine 250 carries the phosphohistidine; by autocatalysis modification. Residues 468 to 515 form a disordered region; the sequence is LTPGGNGTAPVPAAQFDPDMRSAGSRADRRVIKNTETNGKSRSASKEL.

Requires Mg(2+) as cofactor. It depends on Mn(2+) as a cofactor. Post-translationally, autophosphorylated.

The protein localises to the cell membrane. The catalysed reaction is ATP + protein L-histidine = ADP + protein N-phospho-L-histidine.. In terms of biological role, member of the two-component regulatory system MprB/MprA which contributes to maintaining a balance among several systems involved in stress resistance and is required for establishment and maintenance of persistent infection in the host. In response to environmental signals MprB acts both as a membrane-associated protein kinase that undergoes autophosphorylation and subsequently transfers the phosphate to MprA, and a protein phosphatase that dephosphorylates phospho-MprA. This is Signal transduction histidine-protein kinase/phosphatase MprB (mprB) from Mycobacterium sp. (strain KMS).